The primary structure comprises 229 residues: Methyltransferase ctvB (229 aa).

The protein belongs to the methyltransferase superfamily.

Its pathway is mycotoxin biosynthesis. In terms of biological role, methyltransferase; part of the gene cluster that mediates the biosynthesis of citreoviridin, an inhibitor of the of F1-ATPase beta-subunit. The HR-PKS ctvA accepts acetyl-CoA as the starter unit and catalyzes eight iterations of malonyl-CoA extension and four iterations of SAM-dependent methylation at C4, C12, C14, and C16. The KR and DH domains selectively act on the first six iterations to generate the hexaene chain. In the last three iterations, the KR and DH domains terminate their functions to yield a beta,delta-diketo ester moiety, which then undergoes intramolecular cyclization to yield an alpha-pyrone intermediate. Subsequently, ctvB methylates the alpha-pyrone hydroxyl group to generate citreomontanin. In order to form the tetrahydrofuran ring with the correct stereochemistry, the terminal alkenes of citreomontanin need to undergo isomerization to yield a (17Z)-hexaene, a step that could be catalyzed by ctvC. The (17Z)-hexaene then undergoes bisepoxidation by ctvC to form a (17R,16R,15S,14R)-bisepoxide moiety. Lastly, ctvD acts as a regioselective hydrolase to form the tetrahydrofuran ring with the substituents in the correct absolute configuration, completing the biosynthesis of citreoviridin. In Aspergillus terreus (strain NIH 2624 / FGSC A1156), this protein is Methyltransferase ctvB.